The following is a 441-amino-acid chain: MPAAARVPLFVDDLVMVGVNYKTSGKELVEKAQFPDPLAAYSAISRIPAVREVVLLQTCNRVEVYAITTNKKATVESIKSLLEARAGEPIPEEKFVIYYGTDAVRHLFRVAAGLESMVLGEPDILRQVREAAEFAAKEGYIGKALKLTFENAVRVGKRVRTETALGKGSIGIPSASVKLLEELIGLEGKKLLVVGAGMAGRVVAVNAAKRGAKVIIVNRTLSKAKELAEEVGGEAYPLEELPRLLREADAVVVAVGGGSKVITRDAVAEVNKKLVIVDISEPPAVDPGVSLNPYVIYKDMLAVAEVANRGLEKRKSEIKRAEDIIEAELNKFVNFAQRVLADKILRELMEKVEQIRINELSKAMAKVPQEYAEVLDKMTSSLVKKVLKDVILKVREAAGKGDLTTLRIVAEVFDLKESLNNIEIIYDYNGVEQELKRKLEL.

Substrate contacts are provided by residues 58–61 (TCNR), Ser-116, 121–123 (EPD), and Gln-127. The active-site Nucleophile is the Cys-59. 195–200 (GAGMAG) provides a ligand contact to NADP(+).

The protein belongs to the glutamyl-tRNA reductase family. In terms of assembly, homodimer.

The enzyme catalyses (S)-4-amino-5-oxopentanoate + tRNA(Glu) + NADP(+) = L-glutamyl-tRNA(Glu) + NADPH + H(+). It functions in the pathway porphyrin-containing compound metabolism; protoporphyrin-IX biosynthesis; 5-aminolevulinate from L-glutamyl-tRNA(Glu): step 1/2. In terms of biological role, catalyzes the NADPH-dependent reduction of glutamyl-tRNA(Glu) to glutamate 1-semialdehyde (GSA). The polypeptide is Glutamyl-tRNA reductase (Ignicoccus hospitalis (strain KIN4/I / DSM 18386 / JCM 14125)).